The primary structure comprises 392 residues: Aryl-hydrocarbon-interacting protein-like 1 (392 aa).

In terms of domain architecture, PPIase FKBP-type spans 53 to 145; the sequence is RQVDQPMHII…DLDELQKEPQ (93 aa). TPR repeat units follow at residues 178-211, 230-263, and 264-297; these read VPVL…LRNL, NTLT…HPGI, and VKAY…EPSM. Residues 329–392 form a disordered region; it reads QGATQPPAEP…PLSPGHSLQH (64 aa). Pro residues-rich tracts occupy residues 335 to 346 and 355 to 366; these read PAEPPAQPPTAP and PADPPAEPPTAP.

Interacts with NUB1.

The protein localises to the cytoplasm. It is found in the nucleus. In terms of biological role, may be important in protein trafficking and/or protein folding and stabilization. This chain is Aryl-hydrocarbon-interacting protein-like 1 (AIPL1), found in Macaca mulatta (Rhesus macaque).